Here is a 101-residue protein sequence, read N- to C-terminus: Integration host factor subunit alpha (101 aa).

The protein belongs to the bacterial histone-like protein family. As to quaternary structure, heterodimer of an alpha and a beta chain.

In terms of biological role, this protein is one of the two subunits of integration host factor, a specific DNA-binding protein that functions in genetic recombination as well as in transcriptional and translational control. In Dinoroseobacter shibae (strain DSM 16493 / NCIMB 14021 / DFL 12), this protein is Integration host factor subunit alpha.